The sequence spans 462 residues: tRNA modification GTPase MnmE (462 aa).

Residues R23, E86, and K125 each coordinate (6S)-5-formyl-5,6,7,8-tetrahydrofolate. Residues G221–N384 form the TrmE-type G domain. Residue N231 participates in K(+) binding. GTP-binding positions include N231 to T236, S250 to T256, and D275 to G278. Position 235 (S235) interacts with Mg(2+). K(+)-binding residues include S250, I252, and T255. Position 256 (T256) interacts with Mg(2+). K462 is a binding site for (6S)-5-formyl-5,6,7,8-tetrahydrofolate.

Belongs to the TRAFAC class TrmE-Era-EngA-EngB-Septin-like GTPase superfamily. TrmE GTPase family. Homodimer. Heterotetramer of two MnmE and two MnmG subunits. K(+) serves as cofactor.

It localises to the cytoplasm. In terms of biological role, exhibits a very high intrinsic GTPase hydrolysis rate. Involved in the addition of a carboxymethylaminomethyl (cmnm) group at the wobble position (U34) of certain tRNAs, forming tRNA-cmnm(5)s(2)U34. The chain is tRNA modification GTPase MnmE from Flavobacterium psychrophilum (strain ATCC 49511 / DSM 21280 / CIP 103535 / JIP02/86).